The chain runs to 758 residues: Protein hunchback (758 aa).

Disordered stretches follow at residues 30 to 51 and 172 to 214; these read EPGHHLDGNSVASSPRQSPIPS and EKLQ…EDMK. Polar residues predominate over residues 39-51; it reads SVASSPRQSPIPS. A Phosphothreonine modification is found at Thr-178. A phosphoserine mark is found at Ser-188, Ser-207, Ser-209, and Ser-210. A compositionally biased stretch (basic and acidic residues) spans 198-214; that stretch reads EPEKEHDQMSNSSEDMK. 4 C2H2-type zinc fingers span residues 240–262, 269–291, 297–319, and 325–349; these read YKCKTCGVVAITKVDFWAHTRTH, LQCPKCPFVTEFKHHLEYHIRKH, FQCDKCSYTCVNKSMLNSHRKSH, and YRCADCDYATKYCHSFKLHLRKYGH. Disordered stretches follow at residues 365–416 and 513–536; these read LVID…PVAT and QLQQQNQQQSDNEEEEQDDEYERK. 2 stretches are compositionally biased toward low complexity: residues 398 to 415 and 513 to 522; these read VAAVAPQQQQSQPAQPVA and QLQQQNQQQS. The segment covering 523 to 532 has biased composition (acidic residues); sequence DNEEEEQDDE. Phosphoserine occurs at positions 537 and 540. The segment at 603–695 is disordered; it reads MTSPEQLKVP…TTSAVAAPPS (93 aa). Over residues 652 to 695 the composition is skewed to low complexity; sequence ANTSASSTASSSGNSSNASSNSNGNSSSNSSSNGTTSAVAAPPS. 2 consecutive C2H2-type zinc fingers follow at residues 705 to 727 and 733 to 757; these read YECKYCDIFFKDAVLYTIHMGYH and FKCNMCGEKCDGPVGLFVHMARNAH.

Belongs to the hunchback C2H2-type zinc-finger protein family. In embryo, expression of maternal transcript is highest in anterior region. Zygotic transcript is expressed in anterior region until the beginning of gastrulation and in posterior region until early gastrulation. After this, it is expressed in developing nervous system.

It localises to the nucleus. Gap class segmentation protein that controls development of head structures. The protein is Protein hunchback of Drosophila melanogaster (Fruit fly).